The chain runs to 278 residues: MNSRRRPVKKDSEALEISIPFDETPHLDPQIFYSLSPSRGNFEEPSEAASPTAALMNGVRAQLHLALERNSWLQKRIEDLEEERDFLRCQLDKFISSARLDADDHCRGKPGPRRAEGDGRGGTGGEASDPESAASSLSGASEEGSTVERKRQKQKGGPGRRRFGKPKARERQRVKDADGVLCRYKKILGTFQKLKSMSRAFEHHRVDRNTVALTTPIAELLIVAPEKLAEVGEFDPSKERLLEYSRRCFLALDEETLKKVQALKKSKLLLPITYRFKR.

Positions 61-99 form a coiled coil; that stretch reads AQLHLALERNSWLQKRIEDLEEERDFLRCQLDKFISSAR. The segment covering 102–119 has biased composition (basic and acidic residues); sequence ADDHCRGKPGPRRAEGDG. Residues 102 to 174 form a disordered region; the sequence is ADDHCRGKPG…KPKARERQRV (73 aa). Ser-128 is subject to Phosphoserine. Residues 131 to 144 show a composition bias toward low complexity; the sequence is ESAASSLSGASEEG. Residues 150–166 are compositionally biased toward basic residues; sequence KRQKQKGGPGRRRFGKP. Positions 151–164 match the Bipartite nuclear localization signal motif; sequence RQKQKGGPGRRRFG.

In terms of assembly, interacts with p53/TP53.

It localises to the nucleus. Its function is as follows. Promotes the degradation of p53/TP53 protein and inhibits its transactivity. This is Coiled-coil domain-containing protein 106 (CCDC106) from Bos taurus (Bovine).